Consider the following 143-residue polypeptide: Large ribosomal subunit protein uL13 (143 aa).

The protein belongs to the universal ribosomal protein uL13 family. Part of the 50S ribosomal subunit.

This protein is one of the early assembly proteins of the 50S ribosomal subunit, although it is not seen to bind rRNA by itself. It is important during the early stages of 50S assembly. This chain is Large ribosomal subunit protein uL13, found in Geobacter sulfurreducens (strain ATCC 51573 / DSM 12127 / PCA).